We begin with the raw amino-acid sequence, 316 residues long: Protoheme IX farnesyltransferase (316 aa).

Transmembrane regions (helical) follow at residues 32–52 (VMSL…GQIN), 53–73 (PVLG…SGAL), 93–113 (IPAG…LSCF), 116–136 (AILG…TIFF), 152–172 (NIVI…ACVT), 180–200 (TVLF…LALF), 226–246 (IVAY…LGFA), 248–268 (FAYG…SIAV), and 289–309 (IFYL…AMLV).

Belongs to the UbiA prenyltransferase family. Protoheme IX farnesyltransferase subfamily.

It is found in the cell inner membrane. The catalysed reaction is heme b + (2E,6E)-farnesyl diphosphate + H2O = Fe(II)-heme o + diphosphate. It participates in porphyrin-containing compound metabolism; heme O biosynthesis; heme O from protoheme: step 1/1. Functionally, converts heme B (protoheme IX) to heme O by substitution of the vinyl group on carbon 2 of heme B porphyrin ring with a hydroxyethyl farnesyl side group. The polypeptide is Protoheme IX farnesyltransferase (Rhizobium etli (strain CIAT 652)).